The chain runs to 478 residues: tRNA (guanine(10)-N(2))-methyltransferase TRMT11 (478 aa).

The disordered stretch occupies residues E457–V478.

This sequence belongs to the class I-like SAM-binding methyltransferase superfamily. TRM11 methyltransferase family. Part of the heterodimeric TRMT11-TRM112 methyltransferase complex; this complex forms an active tRNA methyltransferase, where TRMT112 acts as an activator of the catalytic subunit TRMT11.

The protein resides in the cytoplasm. It carries out the reaction guanosine(10) in tRNA + S-adenosyl-L-methionine = N(2)-methylguanosine(10) in tRNA + S-adenosyl-L-homocysteine + H(+). In terms of biological role, catalytic subunit of the TRMT11-TRM112 methyltransferase complex, that specifically mediates the S-adenosyl-L-methionine-dependent N(2)-methylation of guanosine nucleotide at position 10 (m2G10) in tRNAs. This is one of the major tRNA (guanine-N(2))-methyltransferases. The sequence is that of tRNA (guanine(10)-N(2))-methyltransferase TRMT11 (trmt11.L) from Xenopus laevis (African clawed frog).